The chain runs to 298 residues: UDP-N-acetylenolpyruvoylglucosamine reductase (298 aa).

The FAD-binding PCMH-type domain occupies 26 to 190 (RAGGPAERLY…VAAVLDLEPG (165 aa)). Residue R170 is part of the active site. The active-site Proton donor is the S219. E289 is a catalytic residue.

Belongs to the MurB family. FAD serves as cofactor.

It is found in the cytoplasm. It catalyses the reaction UDP-N-acetyl-alpha-D-muramate + NADP(+) = UDP-N-acetyl-3-O-(1-carboxyvinyl)-alpha-D-glucosamine + NADPH + H(+). The protein operates within cell wall biogenesis; peptidoglycan biosynthesis. Functionally, cell wall formation. The polypeptide is UDP-N-acetylenolpyruvoylglucosamine reductase (Alkalilimnicola ehrlichii (strain ATCC BAA-1101 / DSM 17681 / MLHE-1)).